The chain runs to 259 residues: Global transcriptional regulator CodY (259 aa).

The interval 1–155 is GAF domain; sequence MELLAKTRKL…SSTVVGMEIL (155 aa). A DNA-binding region (H-T-H motif) is located at residues 203–222; sequence ASKIADRVGITRSVIVNALR. Residue S215 is modified to Phosphoserine.

It belongs to the CodY family.

Its subcellular location is the cytoplasm. Its function is as follows. DNA-binding global transcriptional regulator which is involved in the adaptive response to starvation and acts by directly or indirectly controlling the expression of numerous genes in response to nutrient availability. During rapid exponential growth, CodY is highly active and represses genes whose products allow adaptation to nutrient depletion. This is Global transcriptional regulator CodY from Bacillus cereus (strain B4264).